A 139-amino-acid chain; its full sequence is uncharacterized protein (139 aa).

3 consecutive transmembrane segments (helical) span residues Tyr-38–Phe-60, Phe-72–Ser-94, and Ile-114–Ala-136.

The protein resides in the cell membrane. This is an uncharacterized protein from Treponema pallidum (strain Nichols).